The sequence spans 156 residues: Small ribosomal subunit protein uS7 (156 aa).

It belongs to the universal ribosomal protein uS7 family. Part of the 30S ribosomal subunit. Contacts proteins S9 and S11.

One of the primary rRNA binding proteins, it binds directly to 16S rRNA where it nucleates assembly of the head domain of the 30S subunit. Is located at the subunit interface close to the decoding center, probably blocks exit of the E-site tRNA. The polypeptide is Small ribosomal subunit protein uS7 (Beutenbergia cavernae (strain ATCC BAA-8 / DSM 12333 / CCUG 43141 / JCM 11478 / NBRC 16432 / NCIMB 13614 / HKI 0122)).